The chain runs to 501 residues: Lysine--tRNA ligase (501 aa).

Mg(2+) contacts are provided by Glu-412 and Glu-419.

Belongs to the class-II aminoacyl-tRNA synthetase family. As to quaternary structure, homodimer. Mg(2+) is required as a cofactor.

The protein localises to the cytoplasm. The enzyme catalyses tRNA(Lys) + L-lysine + ATP = L-lysyl-tRNA(Lys) + AMP + diphosphate. This is Lysine--tRNA ligase (lysS) from Pasteurella multocida (strain Pm70).